A 343-amino-acid chain; its full sequence is Cell cycle control protein 50C (343 aa).

Residues 1 to 34 (MKRKCQDYESRLPDNTAVKQQQLPAFRLQLTASE) are Cytoplasmic-facing. Residues 35–55 (ILSGFFAIGLFCLGMGIILLL) form a helical membrane-spanning segment. Residues 56-306 (SAKSIKEVEI…STLTWSGGSS (251 aa)) lie on the Extracellular side of the membrane. 4 N-linked (GlcNAc...) asparagine glycosylation sites follow: Asn66, Asn164, Asn205, and Asn265. Residues 307-327 (LFLALAYLVTGAVTLLASFSM) form a helical membrane-spanning segment. The Cytoplasmic segment spans residues 328-343 (MALHLKLKERKTFFLQ).

It belongs to the CDC50/LEM3 family.

It is found in the membrane. This Bos taurus (Bovine) protein is Cell cycle control protein 50C (TMEM30C).